A 437-amino-acid chain; its full sequence is Nuclear hormone receptor family member nhr-28 (437 aa).

Positions 5–80 form a DNA-binding region, nuclear receptor; the sequence is KSPCSVCGEA…VGMRKSAVQR (76 aa). 2 consecutive NR C4-type zinc fingers follow at residues 8 to 28 and 44 to 68; these read CSVC…CRAC and CRAM…FTKC. The region spanning 115–376 is the NR LBD domain; sequence YEETGMPTLS…ETFYELVSGR (262 aa).

It belongs to the nuclear hormone receptor family. Expressed in the pharynx, intestine and hypodermis.

It localises to the nucleus. Functionally, orphan nuclear receptor. The chain is Nuclear hormone receptor family member nhr-28 (nhr-28) from Caenorhabditis elegans.